Here is a 164-residue protein sequence, read N- to C-terminus: NADH-quinone oxidoreductase subunit B (164 aa).

[4Fe-4S] cluster-binding residues include Cys-38, Cys-39, Cys-104, and Cys-133.

It belongs to the complex I 20 kDa subunit family. NDH-1 is composed of 14 different subunits. Subunits NuoB, C, D, E, F, and G constitute the peripheral sector of the complex. [4Fe-4S] cluster is required as a cofactor.

It localises to the cell inner membrane. It catalyses the reaction a quinone + NADH + 5 H(+)(in) = a quinol + NAD(+) + 4 H(+)(out). Its function is as follows. NDH-1 shuttles electrons from NADH, via FMN and iron-sulfur (Fe-S) centers, to quinones in the respiratory chain. The immediate electron acceptor for the enzyme in this species is believed to be ubiquinone. Couples the redox reaction to proton translocation (for every two electrons transferred, four hydrogen ions are translocated across the cytoplasmic membrane), and thus conserves the redox energy in a proton gradient. The polypeptide is NADH-quinone oxidoreductase subunit B (Protochlamydia amoebophila (strain UWE25)).